Here is a 367-residue protein sequence, read N- to C-terminus: Aminomethyltransferase (367 aa).

It belongs to the GcvT family. As to quaternary structure, the glycine cleavage system is composed of four proteins: P, T, L and H.

It carries out the reaction N(6)-[(R)-S(8)-aminomethyldihydrolipoyl]-L-lysyl-[protein] + (6S)-5,6,7,8-tetrahydrofolate = N(6)-[(R)-dihydrolipoyl]-L-lysyl-[protein] + (6R)-5,10-methylene-5,6,7,8-tetrahydrofolate + NH4(+). Functionally, the glycine cleavage system catalyzes the degradation of glycine. This Mycobacterium avium (strain 104) protein is Aminomethyltransferase.